Consider the following 147-residue polypeptide: Prefoldin subunit alpha (147 aa).

It belongs to the prefoldin alpha subunit family. As to quaternary structure, heterohexamer of two alpha and four beta subunits.

It localises to the cytoplasm. Its function is as follows. Molecular chaperone capable of stabilizing a range of proteins. Seems to fulfill an ATP-independent, HSP70-like function in archaeal de novo protein folding. The protein is Prefoldin subunit alpha of Methanocorpusculum labreanum (strain ATCC 43576 / DSM 4855 / Z).